The chain runs to 215 residues: Phosphatidylserine decarboxylase proenzyme (215 aa).

The active-site Schiff-base intermediate with substrate; via pyruvic acid is serine 184. The residue at position 184 (serine 184) is a Pyruvic acid (Ser); by autocatalysis.

This sequence belongs to the phosphatidylserine decarboxylase family. PSD-A subfamily. As to quaternary structure, heterodimer of a large membrane-associated beta subunit and a small pyruvoyl-containing alpha subunit. Requires pyruvate as cofactor. Is synthesized initially as an inactive proenzyme. Formation of the active enzyme involves a self-maturation process in which the active site pyruvoyl group is generated from an internal serine residue via an autocatalytic post-translational modification. Two non-identical subunits are generated from the proenzyme in this reaction, and the pyruvate is formed at the N-terminus of the alpha chain, which is derived from the carboxyl end of the proenzyme. The post-translation cleavage follows an unusual pathway, termed non-hydrolytic serinolysis, in which the side chain hydroxyl group of the serine supplies its oxygen atom to form the C-terminus of the beta chain, while the remainder of the serine residue undergoes an oxidative deamination to produce ammonia and the pyruvoyl prosthetic group on the alpha chain.

It is found in the cell membrane. It catalyses the reaction a 1,2-diacyl-sn-glycero-3-phospho-L-serine + H(+) = a 1,2-diacyl-sn-glycero-3-phosphoethanolamine + CO2. Its pathway is phospholipid metabolism; phosphatidylethanolamine biosynthesis; phosphatidylethanolamine from CDP-diacylglycerol: step 2/2. Catalyzes the formation of phosphatidylethanolamine (PtdEtn) from phosphatidylserine (PtdSer). The polypeptide is Phosphatidylserine decarboxylase proenzyme (Aromatoleum aromaticum (strain DSM 19018 / LMG 30748 / EbN1) (Azoarcus sp. (strain EbN1))).